The following is a 165-amino-acid chain: 3-isopropylmalate dehydratase small subunit (165 aa).

It belongs to the LeuD family. LeuD type 2 subfamily. As to quaternary structure, heterodimer of LeuC and LeuD.

The enzyme catalyses (2R,3S)-3-isopropylmalate = (2S)-2-isopropylmalate. It functions in the pathway amino-acid biosynthesis; L-leucine biosynthesis; L-leucine from 3-methyl-2-oxobutanoate: step 2/4. Its function is as follows. Catalyzes the isomerization between 2-isopropylmalate and 3-isopropylmalate, via the formation of 2-isopropylmaleate. The chain is 3-isopropylmalate dehydratase small subunit from Saccharolobus islandicus (strain Y.N.15.51 / Yellowstone #2) (Sulfolobus islandicus).